The primary structure comprises 367 residues: Regulator of fusion ref-1 (367 aa).

Residues 1–10 (MVLISTPPPA) show a composition bias toward pro residues. The segment at 1 to 24 (MVLISTPPPAYAHNRKTSQEKKRR) is disordered. Residues 11-24 (YAHNRKTSQEKKRR) are basic motif 1. The region spanning 11-63 (YAHNRKTSQEKKRRDEINAKIKELQLLIQNESDNEKMTQGDVLNRAVEVVSRM) is the bHLH 1 domain. The interval 25–63 (DEINAKIKELQLLIQNESDNEKMTQGDVLNRAVEVVSRM) is helix-loop-helix motif 1. Disordered regions lie at residues 133–177 (RSES…RRDR) and 313–367 (ATSP…RPWE). Positions 141-157 (SSMSYRSQSSSPSTSES) are enriched in low complexity. A compositionally biased stretch (basic and acidic residues) spans 161-177 (IDRKEVKKNREQDRRDR). The segment at 162–175 (DRKEVKKNREQDRR) is basic motif 2. Positions 162 to 219 (DRKEVKKNREQDRRDRQGEAFDALKNFIIENKLMTSHQVEKMQRLNTLDIIIAYIQNK) constitute a bHLH 2 domain. Residues 176-219 (DRQGEAFDALKNFIIENKLMTSHQVEKMQRLNTLDIIIAYIQNK) form a helix-loop-helix motif 2 region. Residues 313–354 (ATSPKSQQSPSYSLDSPPPSSDTSSSSIETPSTPNENSNSNP) are compositionally biased toward low complexity. Residues 356–367 (ASRKSKLFRPWE) show a composition bias toward basic residues.

Interacts with unc-37.

The protein resides in the nucleus. Probable transcription factor. Binds 5'-TGCCACGTGTCCA-3' in vitro, probably via the E-box motif 5'-CA[TC][AG]TG-3'. Acts in embryonic development in a Notch-dependent manner, perhaps as a direct target of transcriptional regulator lag-1 in the Notch signaling pathway. Also acts in embryonic development in a Notch-independent manner. Plays a role in both Notch-dependent and -independent pathways in the execution of neuronal lineage decisions in the embryo. Also involved in regulating cell fate leading to formation of neuronal structures known as postdeirids. Involved in the pattern of cell fusion with a large syncytium known as hyp-7, during larval development, in hermaphrodites. Plays a role in regulating the activity of homeobox protein mab-5 in Pn.p cells. This chain is Regulator of fusion ref-1, found in Caenorhabditis elegans.